The sequence spans 465 residues: Chromosomal replication initiator protein DnaA (465 aa).

Positions 1 to 87 (MLWTDCLTRL…RPGSILSSSE (87 aa)) are domain I, interacts with DnaA modulators. The tract at residues 81 to 123 (SILSSSEQPATTTAALQTAPIPQPAKVKREPEPVANTAVSSKS) is disordered. Positions 88–100 (QPATTTAALQTAP) are enriched in low complexity. Residues 88–127 (QPATTTAALQTAPIPQPAKVKREPEPVANTAVSSKSSKKK) form a domain II region. The interval 128–345 (LLNPQFTFSL…GALNKVVAIS (218 aa)) is domain III, AAA+ region. ATP contacts are provided by G173, G175, K176, and T177. The interval 346–465 (RFKGAPIDLD…YKNLLRLLQS (120 aa)) is domain IV, binds dsDNA.

The protein belongs to the DnaA family. As to quaternary structure, oligomerizes as a right-handed, spiral filament on DNA at oriC.

The protein localises to the cytoplasm. Plays an essential role in the initiation and regulation of chromosomal replication. ATP-DnaA binds to the origin of replication (oriC) to initiate formation of the DNA replication initiation complex once per cell cycle. Binds the DnaA box (a 9 base pair repeat at the origin) and separates the double-stranded (ds)DNA. Forms a right-handed helical filament on oriC DNA; dsDNA binds to the exterior of the filament while single-stranded (ss)DNA is stabiized in the filament's interior. The ATP-DnaA-oriC complex binds and stabilizes one strand of the AT-rich DNA unwinding element (DUE), permitting loading of DNA polymerase. After initiation quickly degrades to an ADP-DnaA complex that is not apt for DNA replication. Binds acidic phospholipids. In Acinetobacter baumannii (strain AB307-0294), this protein is Chromosomal replication initiator protein DnaA.